A 456-amino-acid polypeptide reads, in one-letter code: Cysteine--tRNA ligase (456 aa).

Residue C28 participates in Zn(2+) binding. The 'HIGH' region motif lies at 30-40 (ITVYDHCHLGH). 3 residues coordinate Zn(2+): C209, H234, and E238. The 'KMSKS' region motif lies at 266–270 (KMAKS). K269 lines the ATP pocket.

This sequence belongs to the class-I aminoacyl-tRNA synthetase family. As to quaternary structure, monomer. Requires Zn(2+) as cofactor.

The protein resides in the cytoplasm. The enzyme catalyses tRNA(Cys) + L-cysteine + ATP = L-cysteinyl-tRNA(Cys) + AMP + diphosphate. This chain is Cysteine--tRNA ligase, found in Legionella pneumophila (strain Corby).